Consider the following 415-residue polypeptide: 26S proteasome regulatory subunit 6B (415 aa).

Position 203-210 (203-210 (GPPGCGKT)) interacts with ATP.

Belongs to the AAA ATPase family.

The protein resides in the cytoplasm. Its subcellular location is the nucleus. Functionally, the 26S proteasome is involved in the ATP-dependent degradation of ubiquitinated proteins. The regulatory (or ATPase) complex confers ATP dependency and substrate specificity to the 26S complex. The chain is 26S proteasome regulatory subunit 6B from Manduca sexta (Tobacco hawkmoth).